Consider the following 66-residue polypeptide: DNA gyrase inhibitor YacG (66 aa).

The Zn(2+) site is built by Cys9, Cys12, Cys28, and Cys32. The interval 45–66 is disordered; the sequence is HKIAGSEESEDELYSGDLEPRH.

This sequence belongs to the DNA gyrase inhibitor YacG family. As to quaternary structure, interacts with GyrB. Zn(2+) serves as cofactor.

Inhibits all the catalytic activities of DNA gyrase by preventing its interaction with DNA. Acts by binding directly to the C-terminal domain of GyrB, which probably disrupts DNA binding by the gyrase. In Pseudomonas putida (strain ATCC 47054 / DSM 6125 / CFBP 8728 / NCIMB 11950 / KT2440), this protein is DNA gyrase inhibitor YacG.